The following is a 393-amino-acid chain: Elongation factor Tu (393 aa).

The tr-type G domain occupies 10–203 (KPHVNIGTIG…AVDEFIPEPL (194 aa)). Residues 19-26 (GHVDHGKT) form a G1 region. 19-26 (GHVDHGKT) is a GTP binding site. Residue threonine 26 participates in Mg(2+) binding. Residues 60–64 (GITIS) form a G2 region. A G3 region spans residues 81-84 (DCPG). Residues 81 to 85 (DCPGH) and 136 to 139 (NKVD) contribute to the GTP site. Positions 136–139 (NKVD) are G4. Residues 173–175 (SAL) form a G5 region.

It belongs to the TRAFAC class translation factor GTPase superfamily. Classic translation factor GTPase family. EF-Tu/EF-1A subfamily. Monomer.

The protein localises to the cytoplasm. It catalyses the reaction GTP + H2O = GDP + phosphate + H(+). Its function is as follows. GTP hydrolase that promotes the GTP-dependent binding of aminoacyl-tRNA to the A-site of ribosomes during protein biosynthesis. The sequence is that of Elongation factor Tu from Chlorobium phaeobacteroides (strain DSM 266 / SMG 266 / 2430).